The following is a 165-amino-acid chain: Phosphopantetheine adenylyltransferase (165 aa).

S11 is a substrate binding site. Residues 11–12 (SF) and H19 each bind ATP. Substrate contacts are provided by K43, T76, and R90. ATP-binding positions include 91 to 93 (GIR), E101, and 126 to 132 (FSFISSS).

It belongs to the bacterial CoaD family. Homohexamer. It depends on Mg(2+) as a cofactor.

The protein localises to the cytoplasm. It catalyses the reaction (R)-4'-phosphopantetheine + ATP + H(+) = 3'-dephospho-CoA + diphosphate. It functions in the pathway cofactor biosynthesis; coenzyme A biosynthesis; CoA from (R)-pantothenate: step 4/5. Its function is as follows. Reversibly transfers an adenylyl group from ATP to 4'-phosphopantetheine, yielding dephospho-CoA (dPCoA) and pyrophosphate. The sequence is that of Phosphopantetheine adenylyltransferase from Latilactobacillus sakei subsp. sakei (strain 23K) (Lactobacillus sakei subsp. sakei).